The following is a 111-amino-acid chain: Nucleoid-associated protein lhv_0401 (111 aa).

It belongs to the YbaB/EbfC family. In terms of assembly, homodimer.

It is found in the cytoplasm. The protein localises to the nucleoid. Its function is as follows. Binds to DNA and alters its conformation. May be involved in regulation of gene expression, nucleoid organization and DNA protection. This chain is Nucleoid-associated protein lhv_0401, found in Lactobacillus helveticus (strain DPC 4571).